The following is a 199-amino-acid chain: Protein GrpE (199 aa).

A compositionally biased stretch (basic and acidic residues) spans 1-10 (MTNQTEKEQV). A disordered region spans residues 1 to 44 (MTNQTEKEQVEQDVSQATELAQEAQEAQTQDVEPELQQNNEIDP). A compositionally biased stretch (low complexity) spans 16–30 (QATELAQEAQEAQTQ).

The protein belongs to the GrpE family. As to quaternary structure, homodimer.

Its subcellular location is the cytoplasm. Its function is as follows. Participates actively in the response to hyperosmotic and heat shock by preventing the aggregation of stress-denatured proteins, in association with DnaK and GrpE. It is the nucleotide exchange factor for DnaK and may function as a thermosensor. Unfolded proteins bind initially to DnaJ; upon interaction with the DnaJ-bound protein, DnaK hydrolyzes its bound ATP, resulting in the formation of a stable complex. GrpE releases ADP from DnaK; ATP binding to DnaK triggers the release of the substrate protein, thus completing the reaction cycle. Several rounds of ATP-dependent interactions between DnaJ, DnaK and GrpE are required for fully efficient folding. The protein is Protein GrpE of Glaesserella parasuis serovar 5 (strain SH0165) (Haemophilus parasuis).